Reading from the N-terminus, the 489-residue chain is Glucose-6-phosphate 1-dehydrogenase (489 aa).

Residues 15-22 (GATGDLAK), R49, 86-87 (DV), and K149 each bind NADP(+). H179, K183, E217, and D236 together coordinate substrate. H241 (proton acceptor) is an active-site residue. K341 and K346 together coordinate substrate.

The protein belongs to the glucose-6-phosphate dehydrogenase family.

The catalysed reaction is D-glucose 6-phosphate + NADP(+) = 6-phospho-D-glucono-1,5-lactone + NADPH + H(+). The protein operates within carbohydrate degradation; pentose phosphate pathway; D-ribulose 5-phosphate from D-glucose 6-phosphate (oxidative stage): step 1/3. In terms of biological role, catalyzes the oxidation of glucose 6-phosphate to 6-phosphogluconolactone. This Bacillus subtilis (strain 168) protein is Glucose-6-phosphate 1-dehydrogenase.